Reading from the N-terminus, the 95-residue chain is Co-chaperonin GroES (95 aa).

It belongs to the GroES chaperonin family. In terms of assembly, heptamer of 7 subunits arranged in a ring. Interacts with the chaperonin GroEL.

The protein localises to the cytoplasm. Its function is as follows. Together with the chaperonin GroEL, plays an essential role in assisting protein folding. The GroEL-GroES system forms a nano-cage that allows encapsulation of the non-native substrate proteins and provides a physical environment optimized to promote and accelerate protein folding. GroES binds to the apical surface of the GroEL ring, thereby capping the opening of the GroEL channel. The sequence is that of Co-chaperonin GroES from Nitratidesulfovibrio vulgaris (strain DSM 19637 / Miyazaki F) (Desulfovibrio vulgaris).